We begin with the raw amino-acid sequence, 329 residues long: MQGSVTEFLKPHLVDIEQISSTHAKVILEPLERGFGHTLGNALRRILLSSMPGCAVTEVEIEGVLHEYSSKEGVQEDILEVLLNLKGLAVKVQNKDDVFLTLNKSGIGPVVAGDITHDGDVEIVNPEHVICHLTDENASISMRIRVQRGRGYVPASARAHSQDEERPIGRLLVDACYSPVDRIAYNVEAARVEQRTDLDKLVIELETNGTLDPEEAIRRAATILAEQLDAFVDLRDVRQPEVKEEKPEFDPILLRPVDDLELTVRSANCLKAETIHYIGDLVQRTEVELLKTPNLGKKSLTEIKDVLASRGLSLGMRLDNWPPASIAED.

An alpha N-terminal domain (alpha-NTD) region spans residues 1 to 235; sequence MQGSVTEFLK…EQLDAFVDLR (235 aa). Residues 249 to 329 form an alpha C-terminal domain (alpha-CTD) region; sequence FDPILLRPVD…NWPPASIAED (81 aa).

The protein belongs to the RNA polymerase alpha chain family. In terms of assembly, homodimer. The RNAP catalytic core consists of 2 alpha, 1 beta, 1 beta' and 1 omega subunit. When a sigma factor is associated with the core the holoenzyme is formed, which can initiate transcription.

It catalyses the reaction RNA(n) + a ribonucleoside 5'-triphosphate = RNA(n+1) + diphosphate. Functionally, DNA-dependent RNA polymerase catalyzes the transcription of DNA into RNA using the four ribonucleoside triphosphates as substrates. The polypeptide is DNA-directed RNA polymerase subunit alpha (Actinobacillus succinogenes (strain ATCC 55618 / DSM 22257 / CCUG 43843 / 130Z)).